A 448-amino-acid polypeptide reads, in one-letter code: Fibulin-5 (448 aa).

The signal sequence occupies residues 1–23; sequence MPGLKRILTVTILALWLPHPGNA. Residues 42–82 form the EGF-like 1; calcium-binding domain; the sequence is DIDECRTIPEACRGDMMCVNQNGGYLCIPRTNPVYRGPYSN. 17 cysteine pairs are disulfide-bonded: C46–C59, C53–C68, C131–C144, C138–C153, C155–C166, C172–C181, C177–C190, C192–C205, C211–C221, C217–C230, C232–C245, C251–C262, C258–C271, C273–C286, C292–C305, C299–C314, and C320–C332. The Cell attachment site signature appears at 54 to 56; the sequence is RGD. An EGF-like 2; calcium-binding domain is found at 127 to 167; sequence DVDECATDSHQCNPTQICINTEGGYTCSCTDGYWLLEGQCL. The EGF-like 3; calcium-binding domain occupies 168 to 206; the sequence is DIDECRYGYCQQLCANVPGSYSCTCNPGFTLNDDGRSCQ. Residues 207–246 enclose the EGF-like 4; calcium-binding domain; that stretch reads DVNECETENPCVQTCVNTYGSFICRCDPGYELEEDGIHCS. Residues 245–448 form an interaction with LOXL1 region; the sequence is CSDMDECSFS…LRIYVSQYPF (204 aa). One can recognise an EGF-like 5; calcium-binding domain in the interval 247 to 287; the sequence is DMDECSFSEFLCQHECVNQPGSYFCSCPPGYVLLEDNRSCQ. N283 and N296 each carry an N-linked (GlcNAc...) asparagine glycan. One can recognise an EGF-like 6; calcium-binding domain in the interval 288–333; the sequence is DINECEHRNHTCTPLQTCYNLQGGFKCIDPIVCEEPYLLIGDNRCM.

It belongs to the fibulin family. In terms of assembly, homodimer. Monomer, homodimerizes in presence of Ca(2+). Interacts with ELN. Interacts (via N-terminus) with the integrins ITGAV/ITGB3, ITGAV/ITGB5 and ITGA9/ITGB1. Interacts with FBN1 (via N-terminal domain). Forms a ternary complex with ELN and FBN1. Interacts with EFEMP2 with moderate affinity. Interacts with LOXL1. In terms of processing, N-glycosylated.

It is found in the secreted. The protein localises to the extracellular space. Its subcellular location is the extracellular matrix. In terms of biological role, essential for elastic fiber formation, is involved in the assembly of continuous elastin (ELN) polymer and promotes the interaction of microfibrils and ELN. Stabilizes and organizes elastic fibers in the skin, lung and vasculature. Promotes adhesion of endothelial cells through interaction of integrins and the RGD motif. Vascular ligand for integrin receptors which may play a role in vascular development and remodeling. May act as an adapter that mediates the interaction between FBN1 and ELN. This chain is Fibulin-5 (Fbln5), found in Rattus norvegicus (Rat).